A 313-amino-acid polypeptide reads, in one-letter code: Olfactory receptor 4M2 (313 aa).

Over 1–25 the chain is Extracellular; the sequence is METANYTKVTEFVLTGLSQTPEVQL. An N-linked (GlcNAc...) asparagine glycan is attached at asparagine 5. The chain crosses the membrane as a helical span at residues 26-49; it reads VLFVIFLSFYLFILPGNILIICTI. Residues 50–57 are Cytoplasmic-facing; the sequence is SLDPHLTS. The helical transmembrane segment at 58–79 threads the bilayer; the sequence is PMYFLLANLAFLDIWYSSITAP. Residues 80–100 are Extracellular-facing; sequence EMLIDFFVERKIISFDGCIAQ. An intrachain disulfide couples cysteine 97 to cysteine 189. Residues 101–120 form a helical membrane-spanning segment; the sequence is LFFLHFAGASEMFLLTVMAF. Topologically, residues 121-139 are cytoplasmic; it reads DLYTAICRPLHYATIMNQR. The chain crosses the membrane as a helical span at residues 140–158; the sequence is LCCILVALSWRGGFIHSII. Residues 159 to 195 lie on the Extracellular side of the membrane; that stretch reads QVALIVRLPFCGPNELDSYFCDITQVVRIACANTFPE. The helical transmembrane segment at 196-219 threads the bilayer; sequence ELVMICSSGLISVVCLIALLMSYA. At 220–237 the chain is on the cytoplasmic side; that stretch reads FLLALFKKLSGSGENTNR. The chain crosses the membrane as a helical span at residues 238–260; sequence AMSTCYSHITIVVLMFGPSIYIY. Residues 261-271 are Extracellular-facing; that stretch reads ARPFDSFSLDK. Residues 272–291 form a helical membrane-spanning segment; it reads VVSVFNTLIFPLRNPIIYTL. The Cytoplasmic segment spans residues 292–313; that stretch reads RNKEVKAAMRKLVTKYILCKEK.

This sequence belongs to the G-protein coupled receptor 1 family.

It is found in the cell membrane. Its function is as follows. Odorant receptor. In Homo sapiens (Human), this protein is Olfactory receptor 4M2 (OR4M2).